We begin with the raw amino-acid sequence, 437 residues long: GTP-binding protein ERG (437 aa).

Residues 39–50 (QPNLDEPTSINE) are compositionally biased toward polar residues. The segment at 39–65 (QPNLDEPTSINEDGSSSDSVFDSSQYP) is disordered. Positions 51–62 (DGSSSDSVFDSS) are enriched in low complexity. Residues S111 and S112 each carry the phosphoserine modification. An Era-type G domain is found at 152-333 (KSLNVGIIGP…LMDQAVKKPW (182 aa)). A G1 region spans residues 160–167 (GPPNAGKS). Residue 160–167 (GPPNAGKS) coordinates GTP. Residues 186 to 190 (NTTTH) form a G2 region. The G3 stretch occupies residues 207–210 (DTPG). Residues 207–211 (DTPGL) and 279–282 (NKVD) contribute to the GTP site. Residues 279–282 (NKVD) form a G4 region. Residues 309–311 (ISG) are G5. The KH type-2 domain occupies 361–437 (VHQEIPYGLE…VHLILQVKLK (77 aa)).

The protein belongs to the TRAFAC class TrmE-Era-EngA-EngB-Septin-like GTPase superfamily. Era GTPase family.

Its function is as follows. Has a crucial role in plant growth and development, possibly by influencing mitochondrial division. This Arabidopsis thaliana (Mouse-ear cress) protein is GTP-binding protein ERG (ERG).